The following is a 238-amino-acid chain: Protein FEV (238 aa).

Positions 47–127 (IQLWQFLLEL…HGKRYAYRFD (81 aa)) form a DNA-binding region, ETS. The segment at 129 to 238 (QGLAQACQPP…AASHLGGHYH (110 aa)) is may mediate active transcriptional repression.

This sequence belongs to the ETS family. As to expression, in brain, exclusively expressed in the major serotonergic neurons of the dorsal and median raphe nuclei located in the midbrain and pons. Also detected in prostate and small intestine.

It is found in the nucleus. Functionally, functions as a transcriptional regulator. According to PubMed:12761502, it functions as a transcriptional repressor. Functions in the differentiation and the maintenance of the central serotonergic neurons. May play a role in cell growth. This chain is Protein FEV (FEV), found in Homo sapiens (Human).